The primary structure comprises 73 residues: Large ribosomal subunit protein bL31 (73 aa).

This sequence belongs to the bacterial ribosomal protein bL31 family. Type A subfamily. As to quaternary structure, part of the 50S ribosomal subunit.

Binds the 23S rRNA. The protein is Large ribosomal subunit protein bL31 of Chelativorans sp. (strain BNC1).